The chain runs to 340 residues: Glutaminase 2 (340 aa).

Substrate-binding residues include serine 89, asparagine 140, asparagine 191, tyrosine 215, and tyrosine 267.

This sequence belongs to the glutaminase family. In terms of assembly, homotetramer.

The catalysed reaction is L-glutamine + H2O = L-glutamate + NH4(+). In Yersinia pestis, this protein is Glutaminase 2.